Consider the following 222-residue polypeptide: CEACAM1-like protein UL7 (222 aa).

12 N-linked (GlcNAc...) asparagine; by host glycosylation sites follow: Asn-50, Asn-56, Asn-60, Asn-71, Asn-105, Asn-109, Asn-125, Asn-132, Asn-147, Asn-164, Asn-168, and Asn-189. A helical transmembrane segment spans residues 193-213; it reads LALVGVVVFLVLIVVCIMGWW.

The protein belongs to the RL11 family. Post-translationally, highly glycosylated.

The protein resides in the secreted. The protein localises to the host cell membrane. Plays a role in modulating the host immune response and affecting host cytokine production. Structurally and functionally homolog of host CEACAM1, induces endothelial cell angiogenesis. The polypeptide is CEACAM1-like protein UL7 (UL7) (Homo sapiens (Human)).